The primary structure comprises 407 residues: Arginine deiminase (407 aa).

Residue C397 is the Amidino-cysteine intermediate of the active site.

This sequence belongs to the arginine deiminase family.

The protein localises to the cytoplasm. It carries out the reaction L-arginine + H2O = L-citrulline + NH4(+). The protein operates within amino-acid degradation; L-arginine degradation via ADI pathway; carbamoyl phosphate from L-arginine: step 1/2. This Salmonella arizonae (strain ATCC BAA-731 / CDC346-86 / RSK2980) protein is Arginine deiminase.